The primary structure comprises 85 residues: Cytochrome b (85 aa).

The next 3 helical transmembrane spans lie at 1-8 (LTGLFLAM), 32-53 (WLIRNIHANGASFFFICIYLHI), and 68-85 (WNVGVVLLLLVMMTAFVG). The heme b site is built by histidine 38 and histidine 52.

It belongs to the cytochrome b family. In terms of assembly, the cytochrome bc1 complex contains 3 respiratory subunits (MT-CYB, CYC1 and UQCRFS1), 2 core proteins (UQCRC1 and UQCRC2) and probably 6 low-molecular weight proteins. The cofactor is heme b.

Its subcellular location is the mitochondrion inner membrane. Component of the ubiquinol-cytochrome c reductase complex (complex III or cytochrome b-c1 complex) that is part of the mitochondrial respiratory chain. The b-c1 complex mediates electron transfer from ubiquinol to cytochrome c. Contributes to the generation of a proton gradient across the mitochondrial membrane that is then used for ATP synthesis. In Pomoxis nigromaculatus (Black crappie), this protein is Cytochrome b (mt-cyb).